A 454-amino-acid polypeptide reads, in one-letter code: MKFFDTIVSPATVIGRSGIGIIRISGISVLKIIKKFLKISMKERFAYFSSFYDVKNNLLDQGIALFFLAPKSFTGENILEFHSHGNPIILDLLIKNILTIKNVRIANPGEFSKRAFLNNKIDLVQAEAINDIINAESHLSVKAALSSLRGTFSKKINKILFNLKDIYSEIEAIINFPEELNDLNIQKNIKKKLSFIIKMITNLLDETHKNYIFSNTIKIVIAGPPNVGKSSLLNFLSKEKVSIVTNIPGTTRDVIHKNIWFNGVCCEFLDTAGLQKSQDIIEVIGIKLAKKHIKSCNHIFLMFDVTKKKMINNNFIKNIVNNLKKNQNITFIFNKIDLINKKPYISIIYKKFECIYLSLKKNIGIEYLKNKILEITTLHNNVESTFLAKKRHISALKKSLMYLINGKRNWMKNLYLELLSDDIRLSIKYLLKITGKFNSEDLLDKIFSKFCIGK.

Positions 23, 80, and 120 each coordinate (6S)-5-formyl-5,6,7,8-tetrahydrofolate. Positions 216-377 (TIKIVIAGPP…LKNKILEITT (162 aa)) constitute a TrmE-type G domain. Asn-226 is a binding site for K(+). Residues 226–231 (NVGKSS), 245–251 (TNIPGTT), and 270–273 (DTAG) each bind GTP. Ser-230 provides a ligand contact to Mg(2+). K(+) contacts are provided by Thr-245, Ile-247, and Thr-250. Thr-251 is a Mg(2+) binding site. Position 454 (Lys-454) interacts with (6S)-5-formyl-5,6,7,8-tetrahydrofolate.

It belongs to the TRAFAC class TrmE-Era-EngA-EngB-Septin-like GTPase superfamily. TrmE GTPase family. As to quaternary structure, homodimer. Heterotetramer of two MnmE and two MnmG subunits. Requires K(+) as cofactor.

The protein localises to the cytoplasm. Exhibits a very high intrinsic GTPase hydrolysis rate. Involved in the addition of a carboxymethylaminomethyl (cmnm) group at the wobble position (U34) of certain tRNAs, forming tRNA-cmnm(5)s(2)U34. The polypeptide is tRNA modification GTPase MnmE (Buchnera aphidicola subsp. Cinara cedri (strain Cc)).